The following is a 917-amino-acid chain: Serine/arginine repetitive matrix protein 1 (917 aa).

Residue Met1 is modified to N-acetylmethionine. Positions 1 to 151 (MDAGFFRGTS…ASMKKQDEDK (151 aa)) are necessary for DNA and RNA-binding. Residues 1–156 (MDAGFFRGTS…QDEDKDKRDK (156 aa)) are necessary for mRNA 3'-end cleavage and cytoplasmic accumulation. The residue at position 7 (Arg7) is a Citrulline. Residues 27-126 (QLKFAECLEK…AGIPSAFLEL (100 aa)) form the PWI domain. Lys127 participates in a covalent cross-link: Glycyl lysine isopeptide (Lys-Gly) (interchain with G-Cter in SUMO2). A compositionally biased stretch (basic and acidic residues) spans 139 to 170 (EKLASMKKQDEDKDKRDKEEKESSREKRERSR). The disordered stretch occupies residues 139 to 917 (EKLASMKKQD…MRKAQVSPQS (779 aa)). Residue Lys140 is modified to N6-acetyllysine. Residues 171 to 207 (SPRRRKSRSPSPRRRSSPVRRERKRSHSRSPRHRTKS) show a composition bias toward basic residues. Residues 214–234 (PEKKEKTPELPEPSVKVKEPS) are compositionally biased toward basic and acidic residues. The residue at position 220 (Thr220) is a Phosphothreonine. Ser227 carries the phosphoserine modification. A Glycyl lysine isopeptide (Lys-Gly) (interchain with G-Cter in SUMO1); alternate cross-link involves residue Lys231. Lys231 participates in a covalent cross-link: Glycyl lysine isopeptide (Lys-Gly) (interchain with G-Cter in SUMO2); alternate. A phosphoserine mark is found at Ser234 and Ser240. At Thr241 the chain carries Phosphothreonine. Residues 246 to 275 (KVPKPEPIPEPKEPSPEKNSKKEKEKEKTR) show a composition bias toward basic and acidic residues. A Glycyl lysine isopeptide (Lys-Gly) (interchain with G-Cter in SUMO2) cross-link involves residue Lys249. Ser260 carries the phosphoserine modification. 2 stretches are compositionally biased toward basic residues: residues 276-329 (PRSR…RTPP) and 336-351 (PRHR…RRRS). A necessary for speckles and matrix localization region spans residues 300 to 702 (RRHRSRSRSY…NKRHSPSPRP (403 aa)). Residues 352–368 (SASLSGSSSSSSSSRSR) show a composition bias toward low complexity. Residues Ser389, Ser391, Ser393, and Ser402 each carry the phosphoserine modification. Phosphothreonine is present on Thr406. Ser414 carries the phosphoserine modification. At Thr416 the chain carries Phosphothreonine. A phosphoserine mark is found at Ser420, Ser429, Ser431, and Ser436. The span at 428 to 438 (VSVSPGRTSGK) shows a compositional bias: polar residues. Residue Lys447 forms a Glycyl lysine isopeptide (Lys-Gly) (interchain with G-Cter in SUMO2) linkage. A phosphoserine mark is found at Ser450 and Ser452. Residue Lys459 forms a Glycyl lysine isopeptide (Lys-Gly) (interchain with G-Cter in SUMO2) linkage. A phosphoserine mark is found at Ser463 and Ser465. A Glycyl lysine isopeptide (Lys-Gly) (interchain with G-Cter in SUMO2) cross-link involves residue Lys472. Ser478 carries the phosphoserine modification. A compositionally biased stretch (low complexity) spans 478–501 (SVQQRRQYRRQNQQSSSDSGSSSS). Over residues 503 to 518 (EDERPKRSHVKNGEVG) the composition is skewed to basic and acidic residues. Phosphoserine is present on residues Ser524, Ser526, Ser528, Ser530, Ser532, Ser563, and Ser565. The segment covering 557-574 (SGRRRRSPSPPPTRRRRS) has biased composition (basic residues). A Phosphothreonine modification is found at Thr569. 2 positions are modified to phosphoserine: Ser574 and Ser576. The segment covering 581–606 (PRRRRTPTPPPRRRTPSPPPRRRSPS) has biased composition (basic residues). Phosphothreonine is present on residues Thr586, Thr588, and Thr595. Phosphoserine is present on Ser597. Over residues 607-619 (PRRYSPPIQRRYS) the composition is skewed to low complexity. Position 610 is a phosphotyrosine (Tyr610). A phosphoserine mark is found at Ser611, Ser619, and Ser621. Phosphothreonine is present on Thr628. Phosphoserine is present on residues Ser630, Ser640, Ser642, Ser650, and Ser652. The span at 635–650 (PKRRASPSPPPKRRVS) shows a compositional bias: basic residues. Residues 663-677 (TKRRSPSLSSKHRKG) show a composition bias toward basic residues. The span at 699-713 (SPRPRAPQTSSPPPV) shows a compositional bias: pro residues. Phosphoserine is present on residues Ser708, Ser709, Ser718, Ser720, Ser726, and Ser728. Composition is skewed to low complexity over residues 714-732 (RRGA…PSTR), 749-772 (AASP…SPEP), and 782-799 (SPVQ…AVPV). A Phosphothreonine modification is found at Thr731. Ser751, Ser753, Ser761, Ser765, Ser767, Ser769, Ser782, Ser786, Ser788, and Ser790 each carry phosphoserine. Thr791 is subject to Phosphothreonine. 2 positions are modified to phosphoserine: Ser794 and Ser804. A Phosphothreonine modification is found at Thr806. Residues Ser808, Ser810, and Ser815 each carry the phosphoserine modification. Residues 822–847 (KKKKKKKDKKHKKDKKHKKHKKHKKE) show a composition bias toward basic residues. Low complexity predominate over residues 850–879 (VAAAAAAAVTPAAIAAATTTLAQEEPVAAP). Lys882 participates in a covalent cross-link: Glycyl lysine isopeptide (Lys-Gly) (interchain with G-Cter in SUMO2). A Phosphothreonine modification is found at Thr885. Ser887 carries the post-translational modification Phosphoserine. Basic and acidic residues predominate over residues 895-905 (DLEKHLREKAL). The residue at position 914 (Ser914) is a Phosphoserine.

This sequence belongs to the splicing factor SR family. Identified in the spliceosome C complex. Found in a pre-mRNA splicing complex with SFRS4, SFRS5, SNRP70, SNRPA1, SRRM1 and SRRM2. Component of the minor spliceosome, which splices U12-type introns. Found in a pre-mRNA exonic splicing enhancer (ESE) complex with SNRP70, SNRPA1, SRRM1 and TRA2B/SFRS10. Found in a mRNA splicing-dependent exon junction complex (EJC) with DEK, PRPF8, NCBP1, RBM8A, RNPS1, SRRM1 and ALYREF/THOC4. Interacts with DDX39B, CPSF1, RBM8A, RNPS1, and ALYREF/THOC4. Seems to be a compound of RNA export complexes that are released from speckles in a ATP-dependent manner. Post-translationally, phosphorylated on multiple serine and threonine residues by DYRK3 during the G2-to-M transition, after the nuclear-envelope breakdown. Phosphorylation by DYRK3 promotes disassembly of nuclear speckles. Citrullinated by PADI4.

In terms of biological role, part of pre- and post-splicing multiprotein mRNP complexes. As a component of the minor spliceosome, involved in the splicing of U12-type introns in pre-mRNAs. Involved in numerous pre-mRNA processing events. Promotes constitutive and exonic splicing enhancer (ESE)-dependent splicing activation by bridging together sequence-specific (SR family proteins, SFRS4, SFRS5 and TRA2B/SFRS10) and basal snRNP (SNRP70 and SNRPA1) factors of the spliceosome. Stimulates mRNA 3'-end cleavage independently of the formation of an exon junction complex. Binds both pre-mRNA and spliced mRNA 20-25 nt upstream of exon-exon junctions. Binds RNA and DNA with low sequence specificity and has similar preference for either double- or single-stranded nucleic acid substrates. The chain is Serine/arginine repetitive matrix protein 1 (SRRM1) from Pongo abelii (Sumatran orangutan).